Reading from the N-terminus, the 427-residue chain is Glutamate-1-semialdehyde 2,1-aminomutase (427 aa).

Lys265 carries the post-translational modification N6-(pyridoxal phosphate)lysine.

Belongs to the class-III pyridoxal-phosphate-dependent aminotransferase family. HemL subfamily. As to quaternary structure, homodimer. Pyridoxal 5'-phosphate is required as a cofactor.

The protein resides in the cytoplasm. It carries out the reaction (S)-4-amino-5-oxopentanoate = 5-aminolevulinate. It functions in the pathway porphyrin-containing compound metabolism; protoporphyrin-IX biosynthesis; 5-aminolevulinate from L-glutamyl-tRNA(Glu): step 2/2. The protein is Glutamate-1-semialdehyde 2,1-aminomutase of Pseudomonas putida (strain ATCC 700007 / DSM 6899 / JCM 31910 / BCRC 17059 / LMG 24140 / F1).